A 298-amino-acid chain; its full sequence is MALVNDHPNETNYLSKQNSSSSEDLSSPGLDQPDAAYAGGGGGGGSASSSSTMNSDHQQHQGFVFYPSGEDHHNSLMDFNGSSFLNFDHHESFPPPAISCGGSSGGGGFSFLEGNNMSYGFTNWNHQHHMDIISPRSTETPQGQKDWLYSDSTVVTTGSRNESLSPKSAGNKRSHTGESTQPSKKLSSGVTGKTKPKPTTSPKDPQSLAAKNRRERISERLKILQELVPNGTKVDLVTMLEKAISYVKFLQVQVKVLATDEFWPAQGGKAPDISQVKDAIDAILSSSQRDRNSNLITN.

Disordered regions lie at residues 1–58 (MALV…SDHQ) and 157–213 (TGSR…AKNR). Over residues 15-27 (SKQNSSSSEDLSS) the composition is skewed to low complexity. 2 stretches are compositionally biased toward polar residues: residues 157–168 (TGSRNESLSPKS) and 177–190 (GEST…SSGV). Positions 191–205 (TGKTKPKPTTSPKDP) are enriched in low complexity. The interval 201–214 (SPKDPQSLAAKNRR) is basic motif. Positions 201-250 (SPKDPQSLAAKNRRERISERLKILQELVPNGTKVDLVTMLEKAISYVKFL) constitute a bHLH domain. The interval 215–250 (ERISERLKILQELVPNGTKVDLVTMLEKAISYVKFL) is helix-loop-helix motif.

Homodimer. Forms heterodimers with RSL1. Interacts with TIFY10B/JAZ2, TIFY6A/JAZ4, TIFY5A/JAZ8, TIFY7/JAZ9 and TIFY9/JAZ10. In terms of tissue distribution, expressed constitutively in flowers. Expressed in root epidermal hair cells.

The protein localises to the nucleus. Functionally, transcription factor that is specifically required for the development of root hairs. Acts with RSL1 to positively regulate root hair development. Acts downstream of genes that regulate epidermal pattern formation, such as GL2. Targets directly RSL4, another transcription factor involved in the regulation of root hair elongation. Acts with RSL1 as transcription factor that integrates a jasmonate (JA) signaling pathway that stimulates root hair growth. This chain is Transcription factor RHD6, found in Arabidopsis thaliana (Mouse-ear cress).